Consider the following 84-residue polypeptide: Large ribosomal subunit protein bL27 (84 aa).

Residues 1–29 (MAHKKGGGSTKNGRDSNPKYLGIKASGGS) form a disordered region.

Belongs to the bacterial ribosomal protein bL27 family.

This is Large ribosomal subunit protein bL27 from Chlorobium phaeobacteroides (strain BS1).